The chain runs to 943 residues: Zinc finger BED domain-containing protein 39 (943 aa).

The interval 1 to 99 is disordered; that stretch reads MSSVSSDIDG…DIAMDVSGST (99 aa). The span at 12-21 shows a compositional bias: basic and acidic residues; the sequence is PETKRFRIDV. Over residues 50 to 72 the composition is skewed to low complexity; sequence SPAAPSSASYRSSNSSVISSSES. A compositionally biased stretch (basic and acidic residues) spans 73-85; it reads PIKDEDVDVHDGQ. The BED-type; degenerate zinc finger occupies 184–235; that stretch reads NKQTPVWKYFVYNKTENLSRCIVGDCTYMLKGPHTSTLACHLKKHTREYSEF. Disordered regions lie at residues 242-315 and 328-348; these read YSRT…KEPS and RQATNNSNGSPPTTPHAPQLP. Positions 262-276 are enriched in polar residues; sequence TLQTQNTPRQTGSPA. Over residues 277 to 292 the composition is skewed to low complexity; the sequence is STCNTNSNTSSSVSSG. Over residues 328 to 338 the composition is skewed to polar residues; sequence RQATNNSNGSP.

In terms of tissue distribution, expressed in distal tip cells and in germline cells.

The protein resides in the nucleus. Its subcellular location is the cytoplasm. Its function is as follows. Regulates the timing and orientation of distal tip cell migration during gonadal development. May act in parallel to cacn-1 and Rac GTPases to control the anterior and posterior migration of distal tip cells. The chain is Zinc finger BED domain-containing protein 39 from Caenorhabditis elegans.